A 3093-amino-acid chain; its full sequence is MQQTHVKQVWRPKTASSKVKTSNMVYLAEESSPLAKTELKEDAVVAADMSVINADDAVYGHALEGKYSERKALPARSNETIVSFASGEDGLFLDRAACGSIFKTRTGKDTPIATAIRAATRRGLAYDIAAQLYMCPKCCSASDKVLYFDTNHNDSCQWYLDNCRAVINKDWTLDVIETYNVFPVLVTEEEERRTLEAVDIALKPLGTVPVHDVVQVYDQKIGEHKEVERNQEAAHGSEPAIITTTPVLRRQCIEKRLLRHVHQANKVIANTVEIYDLMTETSQICAEKAIPLVFVDYEKKKRIRPRVPLRHVLESNNVDPSDDLYADVVPFLKHYGTCGRPVGVINPRDIKPGWSGVVLLQDELPESLHQECVDGVFVVQGIGPDGQLKNALKTTTGERIEYYSSKRRMAVNAHVPKAHSFCKYSSLTETLMELDYLRVISALADVHDPQCVECHKERNERSFIENLKYTQQGAQNLFNAGTGMGLAFVASIASGQLMIQRQQPQSSSSIVDQTPRTNEDGSLSHNINLLLTPEVVDIWRSMKQMVHLPNRKLYMASFNDQFGNFDFIPNSTLQGVFPDFTMPVTIALNDDDKVETNYRHVDKNSTIETCVEGLYTQFDAAYWTKKAAQVHKIQPIDQCGMEIGNIALKLCHWEGDVALFSPIIRPTPGHLMFGSTDRLLRIPDMTNARHYVPKVGYCYLYLFALAMNFCDGENRVTVDAYINKTCRELGAWPKFGEVLRALDRMATYYGCYDAVVPVMLVDHVQRTIHVPSPFGIVQSGMHMIQINNLGDLIKLDTMGASELKEYEIGGFRETYKSITKCVKSKSAFMEKLNQDNEWLVDMICNPSTLFVLSQLMDTHGLILKDVENSFDRLAALLALKELGSALGPLLTTRKRVALYMQSLSKVDELVPHLGMPTGAMNLLKSEIELIQNAIVEEQDMAEIDRVEGKKSILERRDEMFAPCVYNEFINSFGYVSLPGIAYRLTYTGVGARIGRGCEHLKTVWSGSWIPEIHLPENLRSNTWSAIKKYTVYSGGTAWRYMKLKIVESATQILVAAVITAIGSWLLKKLLKFIRHEKGRLNEVVVFQSKQEELFISKFMAVCFVISTFFSLDMSNAIYSSLTKFRAIFSILSVGSIYQSGALEKLEEQLGHVDTFHEFKLYDHDATHANIAPSVQSFGTWLDTRVLAGQQGCDPLEGRHTKFEMNKNTRDAIAARVLADKDNEFLVMGHVGCGKSTYFPVALSKQARVLICEPTRVLVTNLHDSMMHTCQVAPSVMMRNHRCITGSSIMVQTYGFALHYLVNNPENLQQYDFVLFDEVHHTCAEKVVLYNWLKGRDWGGKIVKLTATDRSPSAEIKAQKSLDIMTLPTMTPLDFVKEQGLSTKADASKHGKVILVFLTSFREVDSCYDELKRKENFDAIKADSRNLRNKTSLADLISECKKEFIYIFATNILQTGINIEADVVVDFGYKIVPTYDVDNRMLTTTRKPVNKADRIQRLGRVARMKAGVAMKIGATIDPEAYDDEVTATEAALLSFAMQVPPVLRNVNLQIFQRITREQVVTAARFEHQLSYMVWMVNKDGSMPTKLYDLFSPLLLSQGNMRLSPYYSSLYDSDTFMTVKNYVDIGYLKHDRTTNQRLPFHCHDVSTTFAMKVADRFEDSRAPSTYSIRVPAVNLRHTAVKLSTDPAQVGMILVVIGEALVHQKNILEQLKSTRTQLDNYNSCILVPNWNVRGKLDDAINRVERNVSILENQKNSVEKMSVARGYDELKELLEENHAVAAHVMYQKGPQKFIDDVLLQKRDFSWMPYISVGAACLMAGCAWYMLYRQRAKHEAKFEGKASRVKASKQKAFDDKMARADNYTYYETTDELHNHAREWNDYPTDWVDKVRKKANVHAMQFGREAPRRDVRNDRPFFNFYGIDEKLYDTVTFHDMAASFSVEQPITAMEVEEAFEKIYLNRQEDEAFFDHPMPKKILAEFKGKDGKVINVEMEPHNPRKANRRGLPVGYADHRGEFRQAKPAEEGPIKFERKALNPKATPYAVFESKALYGGPRCYEHITNNQVLLAGPSGYLNGLITGSKLLAPYHFVKDISSDSQDPSRMIARFGTYNLGNILNLQVVKFTMIDLIGLDLPVEFQPRRTLKCFRVPVIGEKAVLVLSRYSKEGWKSCVSAETEITPYGENEELLWRHRITTEVGDCGATMVALSDQKIVGFHSLGGISMNYFVPVTQELLDFLSSKTEKPLVPWRFSEDQVDVGGLYIHNDFDKFPFVKTIQKLVGFQNGHMIKYCGEGFTPVARSENRLSRQHVISGQRESFIHFVEASSKWRPLITPMLGRLQPSALNREAYYKDVLKYDKPIRLGTVHEEAFQSAVINVIRILENAGFERGGVKACFDYGKIFNDLNLDAAMGALYAGKKKDYFVEATDEEIEEMFLRSAGKICANGHGVWSALLKAELRPAEKVAANKTRTFTSAPIDILFGAKAVVDDFNKQFYKRHLLGPWTVGINKFNKGWDLLARSLMRYEWFIDADGSQFDSSITPLLMNAVLTIRLYFMERDDITELMLRNLYTQIISTCMLAEDGLIVQKHRGNNSGQPSTVVDNTLCLMIAMEYARQRAISDGHLNMQMRYVCNGDDLLINANEEAKDVVQGKYEQYIKELELNYCFDDAFQSIEGVEFMSHKFMLRNGIYIPKLARHRIVAILEWQRSAEPQAIKSAILAACVEAFGYDDLTELIREYAISLEPVWGSFLPTDGEIEQLYFEGIAKQEVARCLAGVDDVCKFESAASGTNEAVDEVLKAAGDDEALARANAAATSGATTPAQNVGAGTTTPAKATPQSGRRPSFGSLIDNPIGGNGVQDVADRTSGIVFPVPTRKSTSLYLPPKVKLRATPERIEKVRKYLPDPQQIDLRYSTQQELNDWIKASADGLGQTEEAFIDNILPGWIVHCIVNTTSSENRKAGSWRCVTNAGTADEEQVLYDIEPMYSAANPTMRAIMRHFSDLARLVIAESFKQGRPLIPKGYIKAGVLDASSAAAACDFVVRDRHDTATFVQVQNQVLVNRVSGITNRLFAQAMPSAGANEDMARHDAQDAAEGIHNLGGARAF.

One can recognise a Peptidase S30 domain in the interval 255-403 (KRLLRHVHQA…TTTGERIEYY (149 aa)). Catalysis depends on for P1 proteinase activity residues histidine 311, aspartate 323, and serine 355. Residues 690-809 (HYVPKVGYCY…ASELKEYEIG (120 aa)) form the Peptidase C6 domain. Catalysis depends on for helper component proteinase activity residues cysteine 698 and histidine 769. One can recognise a Helicase ATP-binding domain in the interval 1215–1366 (RVLADKDNEF…AQKSLDIMTL (152 aa)). 1228 to 1235 (GHVGCGKS) contributes to the ATP binding site. The short motif at 1316–1319 (DEVH) is the DEVH box element. One can recognise a Helicase C-terminal domain in the interval 1367–1546 (PTMTPLDFVK…QVPPVLRNVN (180 aa)). A Nuclear localization signal motif is present at residues 1883 to 1895 (DKVRKKANVHAMQ). An O-(5'-phospho-RNA)-tyrosine modification is found at tyrosine 1915. The region spanning 2041 to 2257 (SKALYGGPRC…VDVGGLYIHN (217 aa)) is the Peptidase C4 domain. Catalysis depends on for nuclear inclusion protein A activity residues histidine 2082, aspartate 2121, and cysteine 2193. Residues 2516-2639 (EWFIDADGSQ…NANEEAKDVV (124 aa)) enclose the RdRp catalytic domain. Over residues 2800–2826 (NAAATSGATTPAQNVGAGTTTPAKATP) the composition is skewed to low complexity. The segment at 2800-2842 (NAAATSGATTPAQNVGAGTTTPAKATPQSGRRPSFGSLIDNPI) is disordered.

This sequence belongs to the potyviridae genome polyprotein family. Post-translationally, VPg is uridylylated by the polymerase and is covalently attached to the 5'-end of the genomic RNA. This uridylylated form acts as a nucleotide-peptide primer for the polymerase. In terms of processing, genome polyprotein of potyviruses undergoes post-translational proteolytic processing by the main proteinase NIa-pro resulting in the production of at least ten individual proteins. The P1 proteinase and the HC-pro cleave only their respective C-termini autocatalytically. 6K1 is essential for proper proteolytic separation of P3 from CI.

It is found in the host cytoplasmic vesicle. The protein resides in the virion. The enzyme catalyses RNA(n) + a ribonucleoside 5'-triphosphate = RNA(n+1) + diphosphate. It carries out the reaction Hydrolyzes glutaminyl bonds, and activity is further restricted by preferences for the amino acids in P6 - P1' that vary with the species of potyvirus, e.g. Glu-Xaa-Xaa-Tyr-Xaa-Gln-|-(Ser or Gly) for the enzyme from tobacco etch virus. The natural substrate is the viral polyprotein, but other proteins and oligopeptides containing the appropriate consensus sequence are also cleaved.. It catalyses the reaction Hydrolyzes a Gly-|-Gly bond at its own C-terminus, commonly in the sequence -Tyr-Xaa-Val-Gly-|-Gly, in the processing of the potyviral polyprotein.. Its function is as follows. Required for aphid transmission and also has proteolytic activity. Only cleaves a Gly-Gly dipeptide at its own C-terminus. Interacts with virions and aphid stylets. Acts as a suppressor of RNA-mediated gene silencing, also known as post-transcriptional gene silencing (PTGS), a mechanism of plant viral defense that limits the accumulation of viral RNAs. May have RNA-binding activity. In terms of biological role, has helicase activity. It may be involved in replication. Indispensable for virus replication. Reduces the abundance of host transcripts related to jasmonic acid biosynthesis therefore altering the host defenses. In order to increase its own stability, decreases host protein degradation pathways. Functionally, indispensable for virus replication. Its function is as follows. Mediates the cap-independent, EIF4E-dependent translation of viral genomic RNAs. Binds to the cap-binding site of host EIF4E and thus interferes with the host EIF4E-dependent mRNA export and translation. VPg-RNA directly binds EIF4E and is a template for transcription. Also forms trimeric complexes with EIF4E-EIF4G, which are templates for translation. In terms of biological role, has RNA-binding and proteolytic activities. An RNA-dependent RNA polymerase that plays an essential role in the virus replication. Functionally, involved in aphid transmission, cell-to-cell and systemis movement, encapsidation of the viral RNA and in the regulation of viral RNA amplification. The sequence is that of Genome polyprotein from Brome streak virus (strain 11-Cal) (BStV).